The sequence spans 461 residues: Elongation factor 1-alpha, oocyte form (461 aa).

Gly2 carries the post-translational modification N,N,N-trimethylglycine. In terms of domain architecture, tr-type G spans 5–242 (KIHINIVVIG…DCIIPPQRPT (238 aa)). A G1 region spans residues 14–21 (GHVDSGKS). Position 14–21 (14–21 (GHVDSGKS)) interacts with GTP. Residues 70-74 (GITID) form a G2 region. Residues 91–94 (DAPG) form a G3 region. Residues 91–95 (DAPGH) and 153–156 (NKMD) each bind GTP. The segment at 153 to 156 (NKMD) is G4. Positions 194-196 (SGW) are G5. 2 positions are modified to 5-glutamyl glycerylphosphorylethanolamine: Glu301 and Glu374.

This sequence belongs to the TRAFAC class translation factor GTPase superfamily. Classic translation factor GTPase family. EF-Tu/EF-1A subfamily. As to expression, oocyte.

Its subcellular location is the cytoplasm. In terms of biological role, this protein promotes the GTP-dependent binding of aminoacyl-tRNA to the A-site of ribosomes during protein biosynthesis. In Xenopus laevis (African clawed frog), this protein is Elongation factor 1-alpha, oocyte form (eef1ao).